Here is a 317-residue protein sequence, read N- to C-terminus: HTH-type transcriptional regulator CfxR (317 aa).

The HTH lysR-type domain occupies 8–65 (LTLRQLQIFVTVARHASFVRAAEELHLTQPAVSMQVKQLESVVGMALFERVKGQLTLT). A DNA-binding region (H-T-H motif) is located at residues 25–44 (FVRAAEELHLTQPAVSMQVK).

It belongs to the LysR transcriptional regulatory family.

Trans-acting transcriptional regulator of RuBisCO genes (cfxLS) expression. This is HTH-type transcriptional regulator CfxR (cfxR) from Cupriavidus necator (strain ATCC 17699 / DSM 428 / KCTC 22496 / NCIMB 10442 / H16 / Stanier 337) (Ralstonia eutropha).